The primary structure comprises 158 residues: Cell number regulator 11 (158 aa).

Transmembrane regions (helical) follow at residues 49-67 and 78-94; these read FGDL…VTFG and TCCM…TIGW.

This sequence belongs to the cornifelin family.

It is found in the membrane. This chain is Cell number regulator 11 (CNR11), found in Zea mays (Maize).